A 506-amino-acid chain; its full sequence is Nondiscriminating glutamyl-tRNA synthetase EARS2, mitochondrial (506 aa).

The transit peptide at 1-41 (MAALLRRLLQRGRPLAASGRRVGRREARLGTGPGVAVRVRF) directs the protein to the mitochondrion. An L-glutamate-binding site is contributed by 40-42 (RFA). The 'HIGH' region signature appears at 45–53 (PTGFLHLGG). His-50 is an ATP binding site. L-glutamate-binding positions include Glu-76, 228–232 (YHLAC), and Arg-246. An ATP-binding site is contributed by Glu-249. At Lys-256 the chain carries N6-succinyllysine. Residue 284-288 (KLSKR) coordinates ATP. A 'KMSKS' region motif is present at residues 284–288 (KLSKR). Lys-486 is modified (N6-acetyllysine).

The protein belongs to the class-I aminoacyl-tRNA synthetase family. Glutamate--tRNA ligase type 1 subfamily.

It localises to the mitochondrion matrix. The catalysed reaction is tRNA(Glx) + L-glutamate + ATP = L-glutamyl-tRNA(Glx) + AMP + diphosphate. It catalyses the reaction tRNA(Glu) + L-glutamate + ATP = L-glutamyl-tRNA(Glu) + AMP + diphosphate. It carries out the reaction tRNA(Gln) + L-glutamate + ATP = L-glutamyl-tRNA(Gln) + AMP + diphosphate. In terms of biological role, non-discriminating glutamyl-tRNA synthetase that catalyzes aminoacylation of both mitochondrial tRNA(Glu) and tRNA(Gln) and participates in RNA aminoacylation for mitochondrial protein translation. Attachs glutamate to tRNA(Glu) or tRNA(Gln) in a two-step reaction: glutamate is first activated by ATP to form Glu-AMP and then transferred to the acceptor end of tRNA(Glu) or tRNA(Gln). In vitro, cytoplasmic tRNA(Gln) is slightly glutamylated, but with low activity. This is Nondiscriminating glutamyl-tRNA synthetase EARS2, mitochondrial from Macaca fascicularis (Crab-eating macaque).